A 372-amino-acid polypeptide reads, in one-letter code: Delta-type opioid receptor (372 aa).

The Extracellular portion of the chain corresponds to 1–47 (MEPVPSARAELQFSLLANVSDTFPSAFPSASANASGSPGARSASSLA). N-linked (GlcNAc...) asparagine glycans are attached at residues N18 and N33. The chain crosses the membrane as a helical span at residues 48 to 75 (LAIAITALYSAVCAVGLLGNVLVMFGIV). The Cytoplasmic segment spans residues 76-85 (RYTKLKTATN). Residues 86–110 (IYIFNLALADALATSTLPFQSAKYL) traverse the membrane as a helical segment. Over 111–122 (METWPFGELLCK) the chain is Extracellular. The cysteines at positions 121 and 198 are disulfide-linked. Residues 123–144 (AVLSIDYYNMFTSIFTLTMMSV) traverse the membrane as a helical segment. At 145–163 (DRYIAVCHPVKALDFRTPA) the chain is on the cytoplasmic side. The chain crosses the membrane as a helical span at residues 164-186 (KAKLINICIWVLASGVGVPIMVM). Topologically, residues 187–206 (AVTQPRDGAVVCTLQFPSPS) are extracellular. The helical transmembrane segment at 207 to 238 (WYWDTVTKICVFLFAFVVPILIITVCYGLMLL) threads the bilayer. Residues 239 to 261 (RLRSVRLLSGSKEKDRSLRRITR) are Cytoplasmic-facing. A helical membrane pass occupies residues 262–284 (MVLVVVGAFVVCWAPIHIFVIVW). Residues 285 to 299 (TLVDINRRDPLVVAA) are Extracellular-facing. Residues 300-321 (LHLCIALGYANSSLNPVLYAFL) form a helical membrane-spanning segment. At 322 to 372 (DENFKRCFRQLCRAPCGGQEPGSLRRPRQATARERVTACTPSDGPGGGAAA) the chain is on the cytoplasmic side. The S-palmitoyl cysteine moiety is linked to residue C333. The disordered stretch occupies residues 340 to 372 (QEPGSLRRPRQATARERVTACTPSDGPGGGAAA).

The protein belongs to the G-protein coupled receptor 1 family. May form homooligomers. Forms a heterodimer with OPRM1. Interacts with GPRASP1. Interacts with RTP4; the interaction promotes cell surface localization of the OPRD1-OPRM1 heterodimer. Post-translationally, ubiquitinated. A basal ubiquitination seems not to be related to degradation. Ubiquitination is increased upon formation of OPRM1:OPRD1 oligomers leading to proteasomal degradation; the ubiquitination is diminished by RTP4. Detected in brain, brain stem and brain cortex.

The protein resides in the cell membrane. Functionally, G-protein coupled receptor that functions as a receptor for endogenous enkephalins and for a subset of other opioids. Ligand binding causes a conformation change that triggers signaling via guanine nucleotide-binding proteins (G proteins) and modulates the activity of down-stream effectors, such as adenylate cyclase. Signaling leads to the inhibition of adenylate cyclase activity. Inhibits neurotransmitter release by reducing calcium ion currents and increasing potassium ion conductance. Plays a role in the perception of pain and in opiate-mediated analgesia. Plays a role in developing analgesic tolerance to morphine. The polypeptide is Delta-type opioid receptor (Oprd1) (Rattus norvegicus (Rat)).